Reading from the N-terminus, the 527-residue chain is Lysine--tRNA ligase (527 aa).

Mg(2+) contacts are provided by Glu-431 and Glu-438.

It belongs to the class-II aminoacyl-tRNA synthetase family. Homodimer. The cofactor is Mg(2+).

It localises to the cytoplasm. It catalyses the reaction tRNA(Lys) + L-lysine + ATP = L-lysyl-tRNA(Lys) + AMP + diphosphate. The sequence is that of Lysine--tRNA ligase (lysS) from Chlamydia pneumoniae (Chlamydophila pneumoniae).